A 233-amino-acid polypeptide reads, in one-letter code: 5'-methylthioadenosine/S-adenosylhomocysteine nucleosidase (233 aa).

Catalysis depends on E12, which acts as the Proton acceptor. Substrate-binding positions include G78, I156, and 177 to 178; that span reads ME. Residue D201 is the Proton donor of the active site.

This sequence belongs to the PNP/UDP phosphorylase family. MtnN subfamily.

The enzyme catalyses S-adenosyl-L-homocysteine + H2O = S-(5-deoxy-D-ribos-5-yl)-L-homocysteine + adenine. The catalysed reaction is S-methyl-5'-thioadenosine + H2O = 5-(methylsulfanyl)-D-ribose + adenine. It catalyses the reaction 5'-deoxyadenosine + H2O = 5-deoxy-D-ribose + adenine. The protein operates within amino-acid biosynthesis; L-methionine biosynthesis via salvage pathway; S-methyl-5-thio-alpha-D-ribose 1-phosphate from S-methyl-5'-thioadenosine (hydrolase route): step 1/2. Its function is as follows. Catalyzes the irreversible cleavage of the glycosidic bond in both 5'-methylthioadenosine (MTA) and S-adenosylhomocysteine (SAH/AdoHcy) to adenine and the corresponding thioribose, 5'-methylthioribose and S-ribosylhomocysteine, respectively. Also cleaves 5'-deoxyadenosine, a toxic by-product of radical S-adenosylmethionine (SAM) enzymes, into 5-deoxyribose and adenine. In Listeria monocytogenes serovar 1/2a (strain ATCC BAA-679 / EGD-e), this protein is 5'-methylthioadenosine/S-adenosylhomocysteine nucleosidase.